Reading from the N-terminus, the 282-residue chain is Kallikrein-11 (282 aa).

An N-terminal signal peptide occupies residues 1–50; that stretch reads MQRLRWLRDWKSSGRGLTAAKEPGARSSPLQAMRILQLILLALATGLVGG. A propeptide spans 51–53 (activation peptide); that stretch reads ETR. The Peptidase S1 domain occupies 53–280; the sequence is RIIKGFECKP…YVDWIQETMK (228 aa). 6 cysteine pairs are disulfide-bonded: Cys60/Cys195, Cys79/Cys95, Cys167/Cys269, Cys174/Cys241, Cys206/Cys220, and Cys231/Cys256. The Charge relay system role is filled by His94. Asn131 is a glycosylation site (N-linked (GlcNAc...) asparagine). The Charge relay system role is filled by Asp142. 2 N-linked (GlcNAc...) asparagine glycosylation sites follow: Asn197 and Asn213. The active-site Charge relay system is the Ser235. Asn242 carries an N-linked (GlcNAc...) asparagine glycan.

Belongs to the peptidase S1 family. Kallikrein subfamily. In terms of processing, about 40% of KLK11 is inactivated by internal cleavage after Arg-188. This proteolytic inactivation may be effected by plasminogen. As to expression, expressed in brain, skin and prostate. Isoform 1 is expressed preferentially in brain. Isoform 2 is expressed in prostate. Present in seminal plasma at concentrations ranging from 2 to 37 microg/mL (at protein level).

The protein localises to the secreted. The protein resides in the golgi apparatus. Functionally, possible multifunctional protease. Efficiently cleaves 'bz-Phe-Arg-4-methylcoumaryl-7-amide', a kallikrein substrate, and weakly cleaves other substrates for kallikrein and trypsin. Cleaves synthetic peptides after arginine but not lysine residues. This is Kallikrein-11 (KLK11) from Homo sapiens (Human).